The primary structure comprises 209 residues: FMN-dependent NADH:quinone oxidoreductase (209 aa).

FMN is bound by residues Ser-18, 102–105, and 146–149; these read MYNF and SRGG.

Belongs to the azoreductase type 1 family. As to quaternary structure, homodimer. FMN serves as cofactor.

It carries out the reaction 2 a quinone + NADH + H(+) = 2 a 1,4-benzosemiquinone + NAD(+). The enzyme catalyses N,N-dimethyl-1,4-phenylenediamine + anthranilate + 2 NAD(+) = 2-(4-dimethylaminophenyl)diazenylbenzoate + 2 NADH + 2 H(+). Its function is as follows. Quinone reductase that provides resistance to thiol-specific stress caused by electrophilic quinones. In terms of biological role, also exhibits azoreductase activity. Catalyzes the reductive cleavage of the azo bond in aromatic azo compounds to the corresponding amines. The protein is FMN-dependent NADH:quinone oxidoreductase of Saccharophagus degradans (strain 2-40 / ATCC 43961 / DSM 17024).